The sequence spans 143 residues: D-aminoacyl-tRNA deacylase (143 aa).

Positions 135 to 136 match the Gly-cisPro motif, important for rejection of L-amino acids motif; that stretch reads GP.

This sequence belongs to the DTD family. In terms of assembly, homodimer.

It localises to the cytoplasm. It carries out the reaction glycyl-tRNA(Ala) + H2O = tRNA(Ala) + glycine + H(+). The enzyme catalyses a D-aminoacyl-tRNA + H2O = a tRNA + a D-alpha-amino acid + H(+). In terms of biological role, an aminoacyl-tRNA editing enzyme that deacylates mischarged D-aminoacyl-tRNAs. Also deacylates mischarged glycyl-tRNA(Ala), protecting cells against glycine mischarging by AlaRS. Acts via tRNA-based rather than protein-based catalysis; rejects L-amino acids rather than detecting D-amino acids in the active site. By recycling D-aminoacyl-tRNA to D-amino acids and free tRNA molecules, this enzyme counteracts the toxicity associated with the formation of D-aminoacyl-tRNA entities in vivo and helps enforce protein L-homochirality. This is D-aminoacyl-tRNA deacylase from Mycobacterium bovis (strain BCG / Pasteur 1173P2).